We begin with the raw amino-acid sequence, 344 residues long: Sensor histidine kinase GraS (344 aa).

A run of 2 helical transmembrane segments spans residues 18-38 (IFWI…DYDI) and 43-63 (IGFI…FTFL). One can recognise a Histidine kinase domain in the interval 126-332 (EFVHDIKTPV…TFVLTFPKQN (207 aa)). A Phosphohistidine; by autocatalysis modification is found at H129.

Post-translationally, autophosphorylated.

The protein resides in the cell membrane. The catalysed reaction is ATP + protein L-histidine = ADP + protein N-phospho-L-histidine.. In terms of biological role, member of the two-component regulatory system GraR/GraS involved in resistance against cationic antimicrobial peptides (CAMPs). GraS probably functions as a sensor protein kinase which is autophosphorylated at a histidine residue and transfers its phosphate group to GraR. The sequence is that of Sensor histidine kinase GraS (graS) from Staphylococcus haemolyticus (strain JCSC1435).